The sequence spans 436 residues: F-box protein SKIP16 (436 aa).

The 37-residue stretch at 75-111 (RESFRMYPWNLVKRVRLCWDNLKQWLTLNFPEAKATL) folds into the F-box; degenerate domain. An ApaG domain is found at 295–436 (VSVTNGVQVR…FPLELPDYIF (142 aa)).

As to quaternary structure, part of a SCF (ASK-cullin-F-box) protein ligase complex. Interacts with SKP1A/ASK1, SKP1B/ASK2, ASK4, ASK11 and ASK13.

It functions in the pathway protein modification; protein ubiquitination. Functionally, component of SCF(ASK-cullin-F-box) E3 ubiquitin ligase complexes, which may mediate the ubiquitination and subsequent proteasomal degradation of target proteins. This Arabidopsis thaliana (Mouse-ear cress) protein is F-box protein SKIP16 (SKIP16).